A 427-amino-acid chain; its full sequence is Serine--tRNA ligase (427 aa).

231-233 contributes to the L-serine binding site; it reads TAE. ATP is bound at residue 262–264; that stretch reads RSE. Glutamate 285 provides a ligand contact to L-serine. Residue 349–352 coordinates ATP; it reads EISS. Serine 385 provides a ligand contact to L-serine.

It belongs to the class-II aminoacyl-tRNA synthetase family. Type-1 seryl-tRNA synthetase subfamily. As to quaternary structure, homodimer. The tRNA molecule binds across the dimer.

Its subcellular location is the cytoplasm. The catalysed reaction is tRNA(Ser) + L-serine + ATP = L-seryl-tRNA(Ser) + AMP + diphosphate + H(+). It carries out the reaction tRNA(Sec) + L-serine + ATP = L-seryl-tRNA(Sec) + AMP + diphosphate + H(+). It functions in the pathway aminoacyl-tRNA biosynthesis; selenocysteinyl-tRNA(Sec) biosynthesis; L-seryl-tRNA(Sec) from L-serine and tRNA(Sec): step 1/1. Functionally, catalyzes the attachment of serine to tRNA(Ser). Is also able to aminoacylate tRNA(Sec) with serine, to form the misacylated tRNA L-seryl-tRNA(Sec), which will be further converted into selenocysteinyl-tRNA(Sec). The protein is Serine--tRNA ligase of Staphylococcus saprophyticus subsp. saprophyticus (strain ATCC 15305 / DSM 20229 / NCIMB 8711 / NCTC 7292 / S-41).